The sequence spans 645 residues: 1,4-alpha-glucan branching enzyme GlgB (645 aa).

Asp-309 acts as the Nucleophile in catalysis. Glu-352 (proton donor) is an active-site residue. Residues 619–645 form a disordered region; it reads VKTRKGSKKQDGSKTKVRSNVTSRGKR. The segment covering 636–645 has biased composition (polar residues); it reads RSNVTSRGKR.

The protein belongs to the glycosyl hydrolase 13 family. GlgB subfamily. As to quaternary structure, monomer.

The enzyme catalyses Transfers a segment of a (1-&gt;4)-alpha-D-glucan chain to a primary hydroxy group in a similar glucan chain.. It functions in the pathway glycan biosynthesis; glycogen biosynthesis. Catalyzes the formation of the alpha-1,6-glucosidic linkages in glycogen by scission of a 1,4-alpha-linked oligosaccharide from growing alpha-1,4-glucan chains and the subsequent attachment of the oligosaccharide to the alpha-1,6 position. The chain is 1,4-alpha-glucan branching enzyme GlgB from Bacillus cereus (strain AH820).